Here is a 248-residue protein sequence, read N- to C-terminus: 7-cyano-7-deazaguanine synthase (248 aa).

22–32 (LSGGLDSTTCL) is an ATP binding site. Residues Cys-216, Cys-225, Cys-228, and Cys-231 each contribute to the Zn(2+) site.

This sequence belongs to the QueC family. Zn(2+) is required as a cofactor.

The catalysed reaction is 7-carboxy-7-deazaguanine + NH4(+) + ATP = 7-cyano-7-deazaguanine + ADP + phosphate + H2O + H(+). It participates in purine metabolism; 7-cyano-7-deazaguanine biosynthesis. In terms of biological role, catalyzes the ATP-dependent conversion of 7-carboxy-7-deazaguanine (CDG) to 7-cyano-7-deazaguanine (preQ(0)). The protein is 7-cyano-7-deazaguanine synthase of Leptospira biflexa serovar Patoc (strain Patoc 1 / Ames).